A 201-amino-acid polypeptide reads, in one-letter code: Small ribosomal subunit protein uS4 (201 aa).

Residues 91–155 (TRLDNVVYRA…STLPFQVARE (65 aa)) form the S4 RNA-binding domain.

Belongs to the universal ribosomal protein uS4 family. In terms of assembly, part of the 30S ribosomal subunit. Contacts protein S5. The interaction surface between S4 and S5 is involved in control of translational fidelity.

Its function is as follows. One of the primary rRNA binding proteins, it binds directly to 16S rRNA where it nucleates assembly of the body of the 30S subunit. With S5 and S12 plays an important role in translational accuracy. The protein is Small ribosomal subunit protein uS4 of Nocardia farcinica (strain IFM 10152).